Reading from the N-terminus, the 276-residue chain is 4-deoxy-L-threo-5-hexosulose-uronate ketol-isomerase (276 aa).

4 residues coordinate Zn(2+): His-194, His-196, Glu-201, and His-243.

The protein belongs to the KduI family. Zn(2+) is required as a cofactor.

The catalysed reaction is 5-dehydro-4-deoxy-D-glucuronate = 3-deoxy-D-glycero-2,5-hexodiulosonate. The protein operates within glycan metabolism; pectin degradation; 2-dehydro-3-deoxy-D-gluconate from pectin: step 4/5. In terms of biological role, catalyzes the isomerization of 5-dehydro-4-deoxy-D-glucuronate to 3-deoxy-D-glycero-2,5-hexodiulosonate. The polypeptide is 4-deoxy-L-threo-5-hexosulose-uronate ketol-isomerase (Lachnoclostridium phytofermentans (strain ATCC 700394 / DSM 18823 / ISDg) (Clostridium phytofermentans)).